Reading from the N-terminus, the 455-residue chain is Golgi pH regulator (455 aa).

5 helical membrane-spanning segments follow: residues Ile5 to Phe25, Val46 to Leu66, Leu79 to Val99, Cys114 to Leu134, and Val150 to Pro170. N-linked (GlcNAc...) asparagine glycans are attached at residues Asn180 and Asn243. 4 helical membrane passes run Gly290–Phe310, Ile343–Leu363, Val378–Ile398, and Trp425–His445.

The protein belongs to the Golgi pH regulator (TC 1.A.38) family. As to quaternary structure, homotrimer. Interacts with RABL3; the interaction stabilizes GPR89A.

Its subcellular location is the golgi apparatus membrane. It catalyses the reaction iodide(out) = iodide(in). It carries out the reaction chloride(in) = chloride(out). The catalysed reaction is bromide(in) = bromide(out). The enzyme catalyses fluoride(in) = fluoride(out). Its function is as follows. Voltage-gated channel that enables the transfer of monoatomic anions such as iodide, chloride, bromide and fluoride which may function in counter-ion conductance and participates in Golgi acidification. Plays a role in lymphocyte development, probably by acting as a RABL3 effector in hematopoietic cells. The sequence is that of Golgi pH regulator from Bos taurus (Bovine).